An 83-amino-acid polypeptide reads, in one-letter code: UPF0298 protein SERP0712 (83 aa).

This sequence belongs to the UPF0298 family.

It is found in the cytoplasm. This chain is UPF0298 protein SERP0712, found in Staphylococcus epidermidis (strain ATCC 35984 / DSM 28319 / BCRC 17069 / CCUG 31568 / BM 3577 / RP62A).